The following is a 275-amino-acid chain: Expansin-A23 (275 aa).

The N-terminal stretch at 1–27 is a signal peptide; the sequence is MNLLGKMIYVEGFMMIMATLLVSMSYG. The region spanning 72-182 is the Expansin-like EG45 domain; sequence QGACGYGDLF…RRISCARTGG (111 aa). Residues 192-271 form the Expansin-like CBD domain; the sequence is YFLMILPYNV…NWGFGQTFDG (80 aa).

This sequence belongs to the expansin family. Expansin A subfamily.

It localises to the secreted. It is found in the cell wall. The protein resides in the membrane. Causes loosening and extension of plant cell walls by disrupting non-covalent bonding between cellulose microfibrils and matrix glucans. No enzymatic activity has been found. This is Expansin-A23 (EXPA23) from Arabidopsis thaliana (Mouse-ear cress).